The chain runs to 298 residues: Ribosomal protein L11 methyltransferase (298 aa).

S-adenosyl-L-methionine is bound by residues threonine 150, glycine 171, aspartate 193, and asparagine 232.

The protein belongs to the methyltransferase superfamily. PrmA family.

It localises to the cytoplasm. The catalysed reaction is L-lysyl-[protein] + 3 S-adenosyl-L-methionine = N(6),N(6),N(6)-trimethyl-L-lysyl-[protein] + 3 S-adenosyl-L-homocysteine + 3 H(+). Methylates ribosomal protein L11. This is Ribosomal protein L11 methyltransferase from Chromobacterium violaceum (strain ATCC 12472 / DSM 30191 / JCM 1249 / CCUG 213 / NBRC 12614 / NCIMB 9131 / NCTC 9757 / MK).